Consider the following 460-residue polypeptide: 1-aminocyclopropane-1-carboxylate synthase 11 (460 aa).

The substrate site is built by Glu45 and Tyr83. Lys267 carries the N6-(pyridoxal phosphate)lysine modification.

This sequence belongs to the class-I pyridoxal-phosphate-dependent aminotransferase family. In terms of assembly, homodimer and heterodimer. In vivo, the relevance of heterodimerization with other ACS enzymes is however unsure. Interacts with GRF3. Requires pyridoxal 5'-phosphate as cofactor. May be processed at its C-terminus. Expressed in roots.

It catalyses the reaction S-adenosyl-L-methionine = 1-aminocyclopropane-1-carboxylate + S-methyl-5'-thioadenosine + H(+). It functions in the pathway alkene biosynthesis; ethylene biosynthesis via S-adenosyl-L-methionine; ethylene from S-adenosyl-L-methionine: step 1/2. 1-aminocyclopropane-1-carboxylate synthase (ACS) enzymes catalyze the conversion of S-adenosyl-L-methionine (SAM) into 1-aminocyclopropane-1-carboxylate (ACC), a direct precursor of ethylene. In Arabidopsis thaliana (Mouse-ear cress), this protein is 1-aminocyclopropane-1-carboxylate synthase 11 (ACS11).